The primary structure comprises 364 residues: Methylthioribose-1-phosphate isomerase (364 aa).

The active-site Proton donor is Asp254.

Belongs to the eIF-2B alpha/beta/delta subunits family. MtnA subfamily.

The protein resides in the cytoplasm. It localises to the nucleus. It catalyses the reaction 5-(methylsulfanyl)-alpha-D-ribose 1-phosphate = 5-(methylsulfanyl)-D-ribulose 1-phosphate. The protein operates within amino-acid biosynthesis; L-methionine biosynthesis via salvage pathway; L-methionine from S-methyl-5-thio-alpha-D-ribose 1-phosphate: step 1/6. Catalyzes the interconversion of methylthioribose-1-phosphate (MTR-1-P) into methylthioribulose-1-phosphate (MTRu-1-P). This Drosophila yakuba (Fruit fly) protein is Methylthioribose-1-phosphate isomerase.